The sequence spans 404 residues: Exodeoxyribonuclease 7 large subunit (404 aa).

The protein belongs to the XseA family. As to quaternary structure, heterooligomer composed of large and small subunits.

The protein localises to the cytoplasm. The enzyme catalyses Exonucleolytic cleavage in either 5'- to 3'- or 3'- to 5'-direction to yield nucleoside 5'-phosphates.. Bidirectionally degrades single-stranded DNA into large acid-insoluble oligonucleotides, which are then degraded further into small acid-soluble oligonucleotides. This chain is Exodeoxyribonuclease 7 large subunit, found in Fusobacterium nucleatum subsp. nucleatum (strain ATCC 25586 / DSM 15643 / BCRC 10681 / CIP 101130 / JCM 8532 / KCTC 2640 / LMG 13131 / VPI 4355).